The chain runs to 119 residues: Holo-[acyl-carrier-protein] synthase (119 aa).

The Mg(2+) site is built by aspartate 8 and glutamate 58.

Belongs to the P-Pant transferase superfamily. AcpS family. Requires Mg(2+) as cofactor.

Its subcellular location is the cytoplasm. The enzyme catalyses apo-[ACP] + CoA = holo-[ACP] + adenosine 3',5'-bisphosphate + H(+). Transfers the 4'-phosphopantetheine moiety from coenzyme A to a Ser of acyl-carrier-protein. The protein is Holo-[acyl-carrier-protein] synthase of Bacillus cytotoxicus (strain DSM 22905 / CIP 110041 / 391-98 / NVH 391-98).